We begin with the raw amino-acid sequence, 120 residues long: Small ribosomal subunit protein uS13 (120 aa).

The disordered stretch occupies residues 96 to 120 (PCRGQRTRTNARTRKGPRKAIAGKK).

Belongs to the universal ribosomal protein uS13 family. Part of the 30S ribosomal subunit. Forms a loose heterodimer with protein S19. Forms two bridges to the 50S subunit in the 70S ribosome.

Its function is as follows. Located at the top of the head of the 30S subunit, it contacts several helices of the 16S rRNA. In the 70S ribosome it contacts the 23S rRNA (bridge B1a) and protein L5 of the 50S subunit (bridge B1b), connecting the 2 subunits; these bridges are implicated in subunit movement. Contacts the tRNAs in the A and P-sites. In Neisseria gonorrhoeae (strain ATCC 700825 / FA 1090), this protein is Small ribosomal subunit protein uS13.